The following is a 343-amino-acid chain: Phospholipid phosphatase-related protein type 2 (343 aa).

The next 3 helical transmembrane spans lie at 12 to 32 (FSII…VILL), 69 to 89 (VPPA…ILLG), and 129 to 149 (FLGV…AGQV). An N-linked (GlcNAc...) asparagine glycan is attached at N165. The next 3 membrane-spanning stretches (helical) occupy residues 210 to 230 (AALC…VFRV), 239 to 259 (SLCL…VAEY), and 266 to 286 (VLAG…CVVH). The tract at residues 290-343 (SRPPSGRRLSPWEDLGQAPTMDSPLEKNPRSAGRIRHRHGSPHPSRRTAPAVAT) is disordered. Residues S299 and S312 each carry the phosphoserine modification. Positions 322 to 335 (GRIRHRHGSPHPSR) are enriched in basic residues.

Belongs to the PA-phosphatase related phosphoesterase family.

The protein resides in the membrane. In Homo sapiens (Human), this protein is Phospholipid phosphatase-related protein type 2.